Reading from the N-terminus, the 58-residue chain is Mitochondrial import receptor subunit TOM7 homolog (58 aa).

Residues 1-16 are Cytoplasmic-facing; the sequence is MKLSPATKSFIGKTVD. A helical transmembrane segment spans residues 17–35; it reads ISTFAIQWGFVPFVVYLGF. Residues 36 to 58 lie on the Mitochondrial intermembrane side of the membrane; sequence KKGAEPMPNGQILPLSAMSLLWG.

It belongs to the Tom7 family. In terms of assembly, forms part of the preprotein translocase complex of the outer mitochondrial membrane (TOM complex).

The protein localises to the mitochondrion outer membrane. In Caenorhabditis elegans, this protein is Mitochondrial import receptor subunit TOM7 homolog (tomm-7).